The chain runs to 514 residues: MTTTKRPIALLILDGWGYRENTHMNAIFHAKTPVLDRLNAQYPHGLISGSGLDVGLPDGQMGNSEVGHINLGSGRIVYQELTRISKAISDHEFETNPALCDAVDSAINAGGAVHIMGLLSPGGVHSHEEHIEAMCRMAVARGATKVYLHAFLDGRDTPPRSAKASLSHFDDLFTTLGHGRVASIIGRYFAMDRDNRWDRVSQAYELITQGKAKFQYDNAVTALEAAYARDENDEFVSSSAITDVDGKVATLQDGDALIFMNFRADRARQITRSFIHPDFDGFERAVVPKMHFVTLTEYAGDITAPIAYPSENLVNTLGEVLQNRGRTQLRISETEKYAHVTFFFNGGKEEPFEGEDRILINSPKVATYDLQPEMSSTELTDKLVAAIESTKYDVIICNYPNGDMVGHTGNFDAAVKACEAVDTCIGRVVEALAKVGGECIITADHGNAEQMTDETTGQAHTAHTSELVPFIFVGRDATIDKGGKLSDVAPTILQLIGETIPAEMTGKPLIHIKE.

Mn(2+) contacts are provided by aspartate 14 and serine 64. Serine 64 serves as the catalytic Phosphoserine intermediate. Substrate-binding positions include histidine 125, 155–156 (RD), arginine 187, arginine 193, 263–266 (RADR), and lysine 336. Mn(2+)-binding residues include aspartate 403, histidine 407, aspartate 444, histidine 445, and histidine 463.

It belongs to the BPG-independent phosphoglycerate mutase family. As to quaternary structure, monomer. It depends on Mn(2+) as a cofactor.

The enzyme catalyses (2R)-2-phosphoglycerate = (2R)-3-phosphoglycerate. Its pathway is carbohydrate degradation; glycolysis; pyruvate from D-glyceraldehyde 3-phosphate: step 3/5. Its function is as follows. Catalyzes the interconversion of 2-phosphoglycerate and 3-phosphoglycerate. The protein is 2,3-bisphosphoglycerate-independent phosphoglycerate mutase of Shewanella putrefaciens (strain CN-32 / ATCC BAA-453).